The following is a 272-amino-acid chain: Dermonecrotic toxin SpeSicTox-betaIB1b (272 aa).

Residue His-5 is part of the active site. Mg(2+) is bound by residues Glu-25 and Asp-27. The active-site Nucleophile is the His-41. Cystine bridges form between Cys-45–Cys-51 and Cys-47–Cys-191. Asp-85 is a Mg(2+) binding site.

The protein belongs to the arthropod phospholipase D family. Class II subfamily. The cofactor is Mg(2+). Expressed by the venom gland.

The protein localises to the secreted. The enzyme catalyses an N-(acyl)-sphingosylphosphocholine = an N-(acyl)-sphingosyl-1,3-cyclic phosphate + choline. It catalyses the reaction an N-(acyl)-sphingosylphosphoethanolamine = an N-(acyl)-sphingosyl-1,3-cyclic phosphate + ethanolamine. The catalysed reaction is a 1-acyl-sn-glycero-3-phosphocholine = a 1-acyl-sn-glycero-2,3-cyclic phosphate + choline. It carries out the reaction a 1-acyl-sn-glycero-3-phosphoethanolamine = a 1-acyl-sn-glycero-2,3-cyclic phosphate + ethanolamine. Dermonecrotic toxins cleave the phosphodiester linkage between the phosphate and headgroup of certain phospholipids (sphingolipid and lysolipid substrates), forming an alcohol (often choline) and a cyclic phosphate. This toxin acts on sphingomyelin (SM). It may also act on ceramide phosphoethanolamine (CPE), lysophosphatidylcholine (LPC) and lysophosphatidylethanolamine (LPE), but not on lysophosphatidylserine (LPS), and lysophosphatidylglycerol (LPG). It acts by transphosphatidylation, releasing exclusively cyclic phosphate products as second products. Induces dermonecrosis, hemolysis, increased vascular permeability, edema, inflammatory response, and platelet aggregation. This chain is Dermonecrotic toxin SpeSicTox-betaIB1b, found in Sicarius peruensis (Six-eyed sand spider).